The following is a 370-amino-acid chain: Biotin synthase (370 aa).

Positions 79-314 (CCGNVVDLCS…KQIIRYAGGR (236 aa)) constitute a Radical SAM core domain. [4Fe-4S] cluster-binding residues include cysteine 97, cysteine 101, and cysteine 104. Residues cysteine 142, cysteine 179, cysteine 239, and arginine 309 each contribute to the [2Fe-2S] cluster site.

The protein belongs to the radical SAM superfamily. Biotin synthase family. In terms of assembly, homodimer. The cofactor is [4Fe-4S] cluster. Requires [2Fe-2S] cluster as cofactor.

The catalysed reaction is (4R,5S)-dethiobiotin + (sulfur carrier)-SH + 2 reduced [2Fe-2S]-[ferredoxin] + 2 S-adenosyl-L-methionine = (sulfur carrier)-H + biotin + 2 5'-deoxyadenosine + 2 L-methionine + 2 oxidized [2Fe-2S]-[ferredoxin]. It functions in the pathway cofactor biosynthesis; biotin biosynthesis; biotin from 7,8-diaminononanoate: step 2/2. Functionally, catalyzes the conversion of dethiobiotin (DTB) to biotin by the insertion of a sulfur atom into dethiobiotin via a radical-based mechanism. This Trichodesmium erythraeum (strain IMS101) protein is Biotin synthase.